Here is a 418-residue protein sequence, read N- to C-terminus: Gamma-glutamyl phosphate reductase (418 aa).

Belongs to the gamma-glutamyl phosphate reductase family.

It localises to the cytoplasm. The catalysed reaction is L-glutamate 5-semialdehyde + phosphate + NADP(+) = L-glutamyl 5-phosphate + NADPH + H(+). Its pathway is amino-acid biosynthesis; L-proline biosynthesis; L-glutamate 5-semialdehyde from L-glutamate: step 2/2. Its function is as follows. Catalyzes the NADPH-dependent reduction of L-glutamate 5-phosphate into L-glutamate 5-semialdehyde and phosphate. The product spontaneously undergoes cyclization to form 1-pyrroline-5-carboxylate. The polypeptide is Gamma-glutamyl phosphate reductase (Histophilus somni (strain 129Pt) (Haemophilus somnus)).